We begin with the raw amino-acid sequence, 56 residues long: Large ribosomal subunit protein eL37 (56 aa).

Zn(2+)-binding residues include C19, C22, C34, and C37. A C4-type zinc finger spans residues 19 to 37 (CRRCGSVSLNIHTKQCTSC).

Belongs to the eukaryotic ribosomal protein eL37 family. Zn(2+) is required as a cofactor.

Binds to the 23S rRNA. This chain is Large ribosomal subunit protein eL37, found in Methanococcoides burtonii (strain DSM 6242 / NBRC 107633 / OCM 468 / ACE-M).